The primary structure comprises 243 residues: Pyridoxine 5'-phosphate synthase (243 aa).

A 3-amino-2-oxopropyl phosphate-binding site is contributed by Asn-9. Residue 11 to 12 (DH) participates in 1-deoxy-D-xylulose 5-phosphate binding. Residue Arg-20 participates in 3-amino-2-oxopropyl phosphate binding. Residue His-45 is the Proton acceptor of the active site. 1-deoxy-D-xylulose 5-phosphate is bound by residues Arg-47 and His-52. The active-site Proton acceptor is Glu-72. Residue Thr-102 coordinates 1-deoxy-D-xylulose 5-phosphate. The active-site Proton donor is the His-193. 3-amino-2-oxopropyl phosphate is bound by residues Gly-194 and 215 to 216 (GH).

Belongs to the PNP synthase family. As to quaternary structure, homooctamer; tetramer of dimers.

It is found in the cytoplasm. It catalyses the reaction 3-amino-2-oxopropyl phosphate + 1-deoxy-D-xylulose 5-phosphate = pyridoxine 5'-phosphate + phosphate + 2 H2O + H(+). It participates in cofactor biosynthesis; pyridoxine 5'-phosphate biosynthesis; pyridoxine 5'-phosphate from D-erythrose 4-phosphate: step 5/5. Catalyzes the complicated ring closure reaction between the two acyclic compounds 1-deoxy-D-xylulose-5-phosphate (DXP) and 3-amino-2-oxopropyl phosphate (1-amino-acetone-3-phosphate or AAP) to form pyridoxine 5'-phosphate (PNP) and inorganic phosphate. The polypeptide is Pyridoxine 5'-phosphate synthase (Salmonella typhi).